A 403-amino-acid polypeptide reads, in one-letter code: UPF0284 protein PMT_1350 (403 aa).

The protein belongs to the UPF0284 family.

The chain is UPF0284 protein PMT_1350 from Prochlorococcus marinus (strain MIT 9313).